We begin with the raw amino-acid sequence, 391 residues long: NADH-quinone oxidoreductase subunit D (391 aa).

It belongs to the complex I 49 kDa subunit family. As to quaternary structure, NDH-1 is composed of 14 different subunits. Subunits NuoB, C, D, E, F, and G constitute the peripheral sector of the complex.

The protein localises to the cell inner membrane. The catalysed reaction is a quinone + NADH + 5 H(+)(in) = a quinol + NAD(+) + 4 H(+)(out). NDH-1 shuttles electrons from NADH, via FMN and iron-sulfur (Fe-S) centers, to quinones in the respiratory chain. The immediate electron acceptor for the enzyme in this species is believed to be ubiquinone. Couples the redox reaction to proton translocation (for every two electrons transferred, four hydrogen ions are translocated across the cytoplasmic membrane), and thus conserves the redox energy in a proton gradient. This Rickettsia akari (strain Hartford) protein is NADH-quinone oxidoreductase subunit D.